We begin with the raw amino-acid sequence, 623 residues long: Quinoprotein ethanol dehydrogenase (623 aa).

The signal sequence occupies residues 1–34 (MTTRTSPAPAGLLRPSLHCLAFAVALGSAGAALA). Positions 45, 48, and 51 each coordinate Ca(2+). E95 contributes to the pyrroloquinoline quinone binding site. An intrachain disulfide couples C139 to C140. Residues R145, T189, and 207 to 209 (HGS) contribute to the pyrroloquinoline quinone site. E213 contacts Ca(2+). Positions 244–281 (LNGKDSTVTGDVKAPSWPDDRNSPTGKVESWSHGGGAP) are disordered. Ca(2+) contacts are provided by N300 and D350. Residue D350 is the Proton acceptor of the active site. Residue R378 participates in pyrroloquinoline quinone binding. Positions 413 to 434 (GRPVEREGQRPPLPEPGQKHGK) are disordered. Positions 523 and 587 each coordinate pyrroloquinoline quinone.

Belongs to the bacterial PQQ dehydrogenase family. In terms of assembly, homodimer. Interacts with cytochrome c550. The cofactor is pyrroloquinoline quinone. It depends on Ca(2+) as a cofactor. The disulfide ring formed between the two adjacent cysteine residues Cys-139 and Cys-140 is essential for efficient electron transfer at pH 7 from QEDH to its natural electron acceptor cytochrome c550.

It localises to the periplasm. The enzyme catalyses a primary alcohol + 2 Fe(III)-[cytochrome c] = an aldehyde + 2 Fe(II)-[cytochrome c] + 2 H(+). The catalysed reaction is ethanol + 2 Fe(III)-[cytochrome c] = acetaldehyde + 2 Fe(II)-[cytochrome c] + 2 H(+). It carries out the reaction butan-1-ol + 2 Fe(III)-[cytochrome c] = butanal + 2 Fe(II)-[cytochrome c] + 2 H(+). It catalyses the reaction propan-2-ol + 2 Fe(III)-[cytochrome c] = acetone + 2 Fe(II)-[cytochrome c] + 2 H(+). The enzyme catalyses 1-propanol + 2 Fe(III)-[cytochrome c] = propanal + 2 Fe(II)-[cytochrome c] + 2 H(+). The protein operates within alcohol metabolism; ethanol degradation; acetate from ethanol: step 1/2. Inhibited by cyclopropanone ethylhemiketal. Activated by ammonia (500mM), methylamine (5mM), ethylamine (5mM), octylamine (5mM), ethanolamine (5mM) and 1-amino-2-propanol (5mM), in assays using artificial electron acceptors. Ammonia is not needed for, nor does it stimulate, the ethanol-oxidizing activity when using the natural electron acceptor cytochrome c550. In terms of biological role, catalyzes the oxidation of ethanol and other primary alcohols to the corresponding aldehydes, except methanol, which is a very poor substrate. Uses a specific inducible cytochrome c550, encoded by the adjacent gene in the locus, as electron acceptor. Is a key enzyme of the carbon and energy metabolism during growth of P.aeruginosa on ethanol as the sole carbon and energy source. Is also able to use secondary alcohols as well as aminoalcohols like ethanolamine and 1-amino-2-propanol, and aldehydes as substrates. In Pseudomonas aeruginosa (strain ATCC 15692 / DSM 22644 / CIP 104116 / JCM 14847 / LMG 12228 / 1C / PRS 101 / PAO1), this protein is Quinoprotein ethanol dehydrogenase.